Consider the following 171-residue polypeptide: LIM domain transcription factor LMO4-A (171 aa).

The segment covering 1-19 (MVNNRSSESTTTAVSSNGS) has biased composition (polar residues). The disordered stretch occupies residues 1–21 (MVNNRSSESTTTAVSSNGSPP). LIM zinc-binding domains are found at residues 22–84 (KACA…LFGN) and 86–148 (GACN…GLLN).

As to expression, at the start of gastrulation (stage 10), expressed in the mesodermal marginal zone. Shortly after (stage 11), expression is down-regulated in the dorsal most region. During neurulation, expressed in the neural plate and ventral epidermis. At late neurula stages, also expressed more rostrally, and then in the brain, migrating neural crests and ventral epidermis.

Its function is as follows. Acts as a positive cofactor of GATA transcription factors to establish the identity of the ventral mesoderm during gastrulation. Down-regulation in the dorsal mesoderm is necessary for the proper formation of this territory since, when present, lmo4 may bind ldb1 and restrict the availability of this cofactor for Spemman organizer transcription factors. At neurula stages, suppresses primary neuron differentiation and modulates gene expression at the Isthmic Organizer of the midbrain-hindbrain boundary. The polypeptide is LIM domain transcription factor LMO4-A (lmo4-a) (Xenopus laevis (African clawed frog)).